A 396-amino-acid polypeptide reads, in one-letter code: Phosphoglycerate kinase (396 aa).

Substrate-binding positions include 21 to 23 (DFN), R36, 59 to 62 (HLGK), R119, and R156. ATP contacts are provided by residues K206, E325, and 352–355 (GGDS).

The protein belongs to the phosphoglycerate kinase family. In terms of assembly, monomer.

It is found in the cytoplasm. The catalysed reaction is (2R)-3-phosphoglycerate + ATP = (2R)-3-phospho-glyceroyl phosphate + ADP. It functions in the pathway carbohydrate degradation; glycolysis; pyruvate from D-glyceraldehyde 3-phosphate: step 2/5. This is Phosphoglycerate kinase from Staphylococcus carnosus (strain TM300).